A 369-amino-acid chain; its full sequence is Cyclin-dependent kinase 5 activator 2 (369 aa).

Residues 1–11 show a composition bias toward polar residues; that stretch reads MGTVLSLSPAS. 3 disordered regions span residues 1-55, 72-176, and 330-369; these read MGTV…SRLK, ASAK…SPRR, and EAAASTGGPPSGSSASTTSSSSARDSCATGAKHWTMNLDR. The N-myristoyl glycine moiety is linked to residue glycine 2. Residues 74–84 show a composition bias toward basic residues; that stretch reads AKKKKGSKKVT. Residue threonine 84 is modified to Phosphothreonine. The span at 99 to 112 shows a compositional bias: basic and acidic residues; sequence RNRENLLRKGRDGP. Over residues 122-144 the composition is skewed to low complexity; that stretch reads AVPVPTVPTTAATCEPPSGGSAA. Over residues 145-171 the composition is skewed to pro residues; the sequence is APPPGSGGGKPPPPPPPAPQAAPPAPG. A compositionally biased stretch (low complexity) spans 331 to 352; the sequence is AAASTGGPPSGSSASTTSSSSA.

The protein belongs to the cyclin-dependent kinase 5 activator family. As to quaternary structure, heterodimer of a catalytic subunit and a regulatory subunit. In terms of processing, myristoylated. The Gly-2-Ala mutant is absent of the cell periphery, suggesting that a proper myristoylation signal is essential for the proper distribution of CDK5R2 (p39).

It is found in the cell membrane. In terms of biological role, activator of CDK5/TPKII. The protein is Cyclin-dependent kinase 5 activator 2 (Cdk5r2) of Mus musculus (Mouse).